A 179-amino-acid chain; its full sequence is ATP synthase subunit delta (179 aa).

This sequence belongs to the ATPase delta chain family. As to quaternary structure, F-type ATPases have 2 components, F(1) - the catalytic core - and F(0) - the membrane proton channel. F(1) has five subunits: alpha(3), beta(3), gamma(1), delta(1), epsilon(1). F(0) has three main subunits: a(1), b(2) and c(10-14). The alpha and beta chains form an alternating ring which encloses part of the gamma chain. F(1) is attached to F(0) by a central stalk formed by the gamma and epsilon chains, while a peripheral stalk is formed by the delta and b chains.

The protein resides in the cell membrane. In terms of biological role, f(1)F(0) ATP synthase produces ATP from ADP in the presence of a proton or sodium gradient. F-type ATPases consist of two structural domains, F(1) containing the extramembraneous catalytic core and F(0) containing the membrane proton channel, linked together by a central stalk and a peripheral stalk. During catalysis, ATP synthesis in the catalytic domain of F(1) is coupled via a rotary mechanism of the central stalk subunits to proton translocation. Functionally, this protein is part of the stalk that links CF(0) to CF(1). It either transmits conformational changes from CF(0) to CF(1) or is implicated in proton conduction. This Clostridium perfringens (strain ATCC 13124 / DSM 756 / JCM 1290 / NCIMB 6125 / NCTC 8237 / Type A) protein is ATP synthase subunit delta.